The sequence spans 171 residues: 3-hydroxydecanoyl-[acyl-carrier-protein] dehydratase (171 aa).

Histidine 71 is an active-site residue.

It belongs to the thioester dehydratase family. FabA subfamily. Homodimer.

Its subcellular location is the cytoplasm. The catalysed reaction is a (3R)-hydroxyacyl-[ACP] = a (2E)-enoyl-[ACP] + H2O. The enzyme catalyses (3R)-hydroxydecanoyl-[ACP] = (2E)-decenoyl-[ACP] + H2O. It catalyses the reaction (2E)-decenoyl-[ACP] = (3Z)-decenoyl-[ACP]. It functions in the pathway lipid metabolism; fatty acid biosynthesis. In terms of biological role, necessary for the introduction of cis unsaturation into fatty acids. Catalyzes the dehydration of (3R)-3-hydroxydecanoyl-ACP to E-(2)-decenoyl-ACP and then its isomerization to Z-(3)-decenoyl-ACP. Can catalyze the dehydratase reaction for beta-hydroxyacyl-ACPs with saturated chain lengths up to 16:0, being most active on intermediate chain length. This is 3-hydroxydecanoyl-[acyl-carrier-protein] dehydratase from Agrobacterium fabrum (strain C58 / ATCC 33970) (Agrobacterium tumefaciens (strain C58)).